We begin with the raw amino-acid sequence, 286 residues long: uncharacterized protein (286 aa).

One can recognise a Radical SAM core domain in the interval E36 to K256. The [4Fe-4S] cluster site is built by C50, C54, and C57.

It depends on [4Fe-4S] cluster as a cofactor.

This is an uncharacterized protein from Methanocaldococcus jannaschii (strain ATCC 43067 / DSM 2661 / JAL-1 / JCM 10045 / NBRC 100440) (Methanococcus jannaschii).